The sequence spans 93 residues: Cell division protein FtsB (93 aa).

The Cytoplasmic segment spans residues 1-3; sequence MRL. A helical membrane pass occupies residues 4 to 21; sequence FILVLTLLFGWLQYTLWF. Residues 22–93 are Periplasmic-facing; that stretch reads GKNGVSDYYT…FYRIVGEENQ (72 aa). The stretch at 42-75 forms a coiled coil; it reads VNTKLQARNSEMYAEIDDLKQGLDAIEERARHEL.

This sequence belongs to the FtsB family. Part of a complex composed of FtsB, FtsL and FtsQ.

It is found in the cell inner membrane. Functionally, essential cell division protein. May link together the upstream cell division proteins, which are predominantly cytoplasmic, with the downstream cell division proteins, which are predominantly periplasmic. In Vibrio vulnificus (strain YJ016), this protein is Cell division protein FtsB.